The sequence spans 80 residues: Ubiquinol-cytochrome c reductase complex assembly factor 5 (80 aa).

Topologically, residues 1–19 (MFSRAQVRRALQRVPGKQR) are mitochondrial matrix. A helical membrane pass occupies residues 20–41 (FGIYRFLPFFFVLGGAMEWIMI). Over 42-80 (KVRVGQETFYDVYRRKASERQYQRRLEDTSETNLHKLIK) the chain is Mitochondrial intermembrane.

Belongs to the UQCC5 family. Associates with the mitochondrial ribosome. Interacts with UQCC6. Interacts with MT-CYB; interacts with newly synthesizes MT-CYB. Forms a complex, named COMB/coordinator of mitochondrial CYTB biogenesis, composed of UQCC1, UQCC2, UQCC4, UQCC5 and UQCC6; stabilizes nascent cytochrome b/MT-CYB and promotes its membrane insertion.

Its subcellular location is the mitochondrion inner membrane. Functionally, required for the assembly and stability of the mitochondrial ubiquinol-cytochrome c reductase complex (complex III (CIII) or cytochrome b-c1 complex), a multisubunit transmembrane complex that is part of the mitochondrial electron transport chain (ETC) which drives oxidative phosphorylation. Mediates early complex III biogenesis. Participates in regulating the levels of electron transport chain proteins, and therefore energy supply, in response to changes in energy demand. Also required for cytochrome c oxidase complex (complex IV) assembly. This is Ubiquinol-cytochrome c reductase complex assembly factor 5 from Mus musculus (Mouse).